The primary structure comprises 330 residues: Complement factor H-related protein 3 (330 aa).

The N-terminal stretch at 1–18 is a signal peptide; sequence MLLLINVILTLWVSCANG. 5 consecutive Sushi domains span residues 22 to 84, 85 to 142, 144 to 205, 208 to 266, and 267 to 330; these read PCDF…VPCL, RKCY…RCIR, RTCS…ICIN, EKCG…RCIH, and PCII…PRCE. Intrachain disulfides connect cysteine 23/cysteine 72, cysteine 55/cysteine 83, cysteine 87/cysteine 129, cysteine 114/cysteine 140, cysteine 146/cysteine 192, and cysteine 175/cysteine 203. Residue asparagine 108 is glycosylated (N-linked (GlcNAc...) asparagine). Asparagine 185 and asparagine 205 each carry an N-linked (GlcNAc...) asparagine glycan. 4 disulfides stabilise this stretch: cysteine 210–cysteine 253, cysteine 239–cysteine 264, cysteine 268–cysteine 319, and cysteine 302–cysteine 329. N-linked (GlcNAc...) asparagine glycosylation occurs at asparagine 309.

In terms of tissue distribution, expressed by the liver and secreted in plasma.

It is found in the secreted. In terms of biological role, might be involved in complement regulation. This Homo sapiens (Human) protein is Complement factor H-related protein 3 (CFHR3).